The chain runs to 113 residues: UPF0122 protein LSEI_1603 (113 aa).

This sequence belongs to the UPF0122 family.

Its function is as follows. Might take part in the signal recognition particle (SRP) pathway. This is inferred from the conservation of its genetic proximity to ftsY/ffh. May be a regulatory protein. This chain is UPF0122 protein LSEI_1603, found in Lacticaseibacillus paracasei (strain ATCC 334 / BCRC 17002 / CCUG 31169 / CIP 107868 / KCTC 3260 / NRRL B-441) (Lactobacillus paracasei).